The sequence spans 235 residues: Protein Thf1 (235 aa).

Residues 183–204 adopt a coiled-coil conformation; sequence DKLNKDLELYRSNLDKMAQALV. Positions 213 to 235 are disordered; that stretch reads DRKKREQRKQQSTAPVAPPSSNE. Over residues 222–235 the composition is skewed to polar residues; sequence QQSTAPVAPPSSNE.

Belongs to the THF1 family.

May be involved in photosynthetic membrane biogenesis. The chain is Protein Thf1 from Nostoc punctiforme (strain ATCC 29133 / PCC 73102).